Consider the following 176-residue polypeptide: UBA-like domain-containing protein 1 (176 aa).

Low complexity-rich tracts occupy residues 88-105 and 120-137; these read ESFH…TSAT and TPSW…QHLQ. The disordered stretch occupies residues 88–176; sequence ESFHSGGSSG…RAHPAMEAER (89 aa). The span at 138 to 150 shows a compositional bias: pro residues; sequence PQPPLWTPAPPSP. Positions 166-176 are enriched in basic and acidic residues; the sequence is PRAHPAMEAER.

The protein belongs to the UBALD family.

The sequence is that of UBA-like domain-containing protein 1 (Ubald1) from Rattus norvegicus (Rat).